We begin with the raw amino-acid sequence, 386 residues long: Acetylornithine aminotransferase (386 aa).

Residues 94-95 (GT) and Phe121 each bind pyridoxal 5'-phosphate. Arg124 contacts N(2)-acetyl-L-ornithine. Residue 206–209 (DEVQ) participates in pyridoxal 5'-phosphate binding. At Lys235 the chain carries N6-(pyridoxal phosphate)lysine. Ser263 is a binding site for N(2)-acetyl-L-ornithine. Thr264 lines the pyridoxal 5'-phosphate pocket.

Belongs to the class-III pyridoxal-phosphate-dependent aminotransferase family. ArgD subfamily. As to quaternary structure, homodimer. Pyridoxal 5'-phosphate is required as a cofactor.

Its subcellular location is the cytoplasm. The enzyme catalyses N(2)-acetyl-L-ornithine + 2-oxoglutarate = N-acetyl-L-glutamate 5-semialdehyde + L-glutamate. It participates in amino-acid biosynthesis; L-arginine biosynthesis; N(2)-acetyl-L-ornithine from L-glutamate: step 4/4. This chain is Acetylornithine aminotransferase, found in Listeria monocytogenes serotype 4b (strain F2365).